We begin with the raw amino-acid sequence, 163 residues long: Nucleotide-binding protein LA_3406 (163 aa).

It belongs to the YajQ family.

In terms of biological role, nucleotide-binding protein. The chain is Nucleotide-binding protein LA_3406 from Leptospira interrogans serogroup Icterohaemorrhagiae serovar Lai (strain 56601).